The sequence spans 147 residues: Sec-independent protein translocase protein TatB (147 aa).

The helical transmembrane segment at 2 to 22 threads the bilayer; it reads FDGIGFMELLLIGVLGLVVLG. Residues 68 to 147 form a disordered region; that stretch reads ESKGLSNLSP…DTRSNPKANG (80 aa). Positions 71–97 are enriched in polar residues; that stretch reads GLSNLSPELQESIDQLKQAAQSVNRPY. Over residues 112-133 the composition is skewed to low complexity; it reads PASQSVSSEASPTASSAPTSEP.

This sequence belongs to the TatB family. In terms of assembly, the Tat system comprises two distinct complexes: a TatABC complex, containing multiple copies of TatA, TatB and TatC subunits, and a separate TatA complex, containing only TatA subunits. Substrates initially bind to the TatABC complex, which probably triggers association of the separate TatA complex to form the active translocon.

The protein resides in the cell inner membrane. Part of the twin-arginine translocation (Tat) system that transports large folded proteins containing a characteristic twin-arginine motif in their signal peptide across membranes. Together with TatC, TatB is part of a receptor directly interacting with Tat signal peptides. TatB may form an oligomeric binding site that transiently accommodates folded Tat precursor proteins before their translocation. The sequence is that of Sec-independent protein translocase protein TatB from Shewanella sp. (strain MR-4).